Here is a 208-residue protein sequence, read N- to C-terminus: Small ribosomal subunit protein uS4 (208 aa).

The 64-residue stretch at 97 to 160 (TRLDNVCYRM…QKQLRVQEAL (64 aa)) folds into the S4 RNA-binding domain.

It belongs to the universal ribosomal protein uS4 family. Part of the 30S ribosomal subunit. Contacts protein S5. The interaction surface between S4 and S5 is involved in control of translational fidelity.

Its function is as follows. One of the primary rRNA binding proteins, it binds directly to 16S rRNA where it nucleates assembly of the body of the 30S subunit. With S5 and S12 plays an important role in translational accuracy. The chain is Small ribosomal subunit protein uS4 from Xanthomonas oryzae pv. oryzae (strain MAFF 311018).